Consider the following 580-residue polypeptide: Extracellular protease (580 aa).

Residues M1–A32 form the signal peptide. The propeptide occupies G33 to T136. Residues Q147 to V465 enclose the Peptidase S8 domain. Residues D177 and H237 each act as charge relay system in the active site. 2 disulfides stabilise this stretch: C225-C273 and C315-C352. The active-site Charge relay system is the S409. A disulfide bridge connects residues C450 and C454.

Belongs to the peptidase S8 family.

The protein resides in the secreted. In Xanthomonas campestris pv. campestris (strain ATCC 33913 / DSM 3586 / NCPPB 528 / LMG 568 / P 25), this protein is Extracellular protease.